The sequence spans 364 residues: WAT1-related protein At3g30340 (364 aa).

The next 10 helical transmembrane spans lie at 9–29 (WKAV…NVMF), 41–61 (VATT…AIFL), 76–96 (SLFF…LIGL), 102–122 (TFSL…ALVF), 138–158 (LLGT…KGTA), 183–203 (WAMG…WFIV), 215–235 (YTST…LSLI), 251–271 (VLAL…GMSW), 277–297 (GAVF…IFSF), and 304–324 (IYCG…ILLW). 2 EamA domains span residues 26–152 (NVMF…LVLT) and 195–323 (IIWS…YILL).

It belongs to the drug/metabolite transporter (DMT) superfamily. Plant drug/metabolite exporter (P-DME) (TC 2.A.7.4) family.

The protein localises to the membrane. In Arabidopsis thaliana (Mouse-ear cress), this protein is WAT1-related protein At3g30340.